A 68-amino-acid polypeptide reads, in one-letter code: Large ribosomal subunit protein bL32 (68 aa).

It belongs to the bacterial ribosomal protein bL32 family.

This Aster yellows witches'-broom phytoplasma (strain AYWB) protein is Large ribosomal subunit protein bL32.